Consider the following 1444-residue polypeptide: DNA polymerase III PolC-type (1444 aa).

The segment at 196–218 (EAVQVMQKRQAEGQNGNSSAAPL) is disordered. The span at 207–216 (EGQNGNSSAA) shows a compositional bias: polar residues. In terms of domain architecture, Exonuclease spans 428-584 (YCVFDVETTG…FDAEATAYLA (157 aa)).

Belongs to the DNA polymerase type-C family. PolC subfamily.

It is found in the cytoplasm. The catalysed reaction is DNA(n) + a 2'-deoxyribonucleoside 5'-triphosphate = DNA(n+1) + diphosphate. Its function is as follows. Required for replicative DNA synthesis. This DNA polymerase also exhibits 3' to 5' exonuclease activity. This chain is DNA polymerase III PolC-type, found in Listeria welshimeri serovar 6b (strain ATCC 35897 / DSM 20650 / CCUG 15529 / CIP 8149 / NCTC 11857 / SLCC 5334 / V8).